Consider the following 400-residue polypeptide: Lipase member N (400 aa).

Residues 1 to 19 (MPMMWLFLTTACLIPGTLS) form the signal peptide. The region spanning 81–381 (PVVYMQHALF…DWNHFDFVWG (301 aa)) is the AB hydrolase-1 domain. Ser-175 functions as the Nucleophile in the catalytic mechanism. An intrachain disulfide couples Cys-249 to Cys-258. A glycan (N-linked (GlcNAc...) asparagine) is linked at Asn-274. Residues Asp-346 and His-375 each act as charge relay system in the active site.

Belongs to the AB hydrolase superfamily. Lipase family. As to expression, highly expressed in the epidermis. Also detected in other tissues, although at much lower levels, including liver and kidney.

The protein resides in the secreted. The enzyme catalyses a sterol ester + H2O = a sterol + a fatty acid + H(+). It catalyses the reaction a triacylglycerol + H2O = a 1,2-diacylglycerol + a fatty acid + H(+). It carries out the reaction a triacylglycerol + H2O = a diacylglycerol + a fatty acid + H(+). The catalysed reaction is a cholesterol ester + H2O = cholesterol + a fatty acid + H(+). Functionally, plays a highly specific role in the last step of keratinocyte differentiation. Contains two distinct domains: the alpha/beta hydrolase fold and the abhydrolase-associated lipase region, also features the consensus sequence of the active site of a genuine lipase. May have an essential function in lipid metabolism of the most differentiated epidermal layers. The chain is Lipase member N (Lipn) from Mus musculus (Mouse).